Reading from the N-terminus, the 610-residue chain is GPI transamidase component GPI16 (610 aa).

A signal peptide spans 1–19; it reads MILTLAYFMLGTLLLGVFA. The Lumenal segment spans residues 20–551; that stretch reads EDTVSQIGIN…STPDFSMPYN (532 aa). N-linked (GlcNAc...) asparagine glycosylation occurs at N184. Residues 552 to 572 traverse the membrane as a helical segment; the sequence is VIILTSTIMGLIFGMLYNLMV. Topologically, residues 573-610 are cytoplasmic; the sequence is KRMVTVEEADKITLQSGLKYKLLKLKEKFLGKKKTKTD.

This sequence belongs to the PIGT family. As to quaternary structure, forms a complex with CDC91, GPI17, GPI8 and GAA1. Post-translationally, the disulfide bond between GPI8 and GPI16 is important for normal enzyme activity.

The protein resides in the endoplasmic reticulum membrane. Its pathway is glycolipid biosynthesis; glycosylphosphatidylinositol-anchor biosynthesis. Component of the GPI transamidase complex. Involved in transfer of GPI to proteins. The chain is GPI transamidase component GPI16 (GPI16) from Saccharomyces cerevisiae (strain ATCC 204508 / S288c) (Baker's yeast).